Consider the following 450-residue polypeptide: Tubulin alpha-3 chain (450 aa).

Q11 is a binding site for GTP. K40 is modified (N6-acetyllysine). Residues E71, G144, T145, T179, N206, and N228 each contribute to the GTP site. E71 serves as a coordination point for Mg(2+). The active site involves E254.

The protein belongs to the tubulin family. In terms of assembly, dimer of alpha and beta chains. A typical microtubule is a hollow water-filled tube with an outer diameter of 25 nm and an inner diameter of 15 nM. Alpha-beta heterodimers associate head-to-tail to form protofilaments running lengthwise along the microtubule wall with the beta-tubulin subunit facing the microtubule plus end conferring a structural polarity. Microtubules usually have 13 protofilaments but different protofilament numbers can be found in some organisms and specialized cells. Requires Mg(2+) as cofactor. In terms of processing, undergoes a tyrosination/detyrosination cycle, the cyclic removal and re-addition of a C-terminal tyrosine residue by the enzymes tubulin tyrosine carboxypeptidase (TTCP) and tubulin tyrosine ligase (TTL), respectively. Post-translationally, acetylation of alpha chains at Lys-40 stabilizes microtubules and affects affinity and processivity of microtubule motors. This modification has a role in multiple cellular functions, ranging from cell motility, cell cycle progression or cell differentiation to intracellular trafficking and signaling.

The protein resides in the cytoplasm. It is found in the cytoskeleton. The enzyme catalyses GTP + H2O = GDP + phosphate + H(+). In terms of biological role, tubulin is the major constituent of microtubules, a cylinder consisting of laterally associated linear protofilaments composed of alpha- and beta-tubulin heterodimers. Microtubules grow by the addition of GTP-tubulin dimers to the microtubule end, where a stabilizing cap forms. Below the cap, tubulin dimers are in GDP-bound state, owing to GTPase activity of alpha-tubulin. This chain is Tubulin alpha-3 chain (TUBA3), found in Zea mays (Maize).